Consider the following 203-residue polypeptide: V-type ATP synthase subunit D (203 aa).

Belongs to the V-ATPase D subunit family.

Produces ATP from ADP in the presence of a proton gradient across the membrane. The sequence is that of V-type ATP synthase subunit D from Streptococcus pneumoniae (strain CGSP14).